Here is a 409-residue protein sequence, read N- to C-terminus: Histone deacetylase 7 (409 aa).

A histone deacetylase region spans residues 11–324; the sequence is RVSYFYEPMI…WCYETAIAVG (314 aa). Catalysis depends on histidine 148, which acts as the Proton donor/acceptor. Aspartate 267 lines the Zn(2+) pocket. The tract at residues 383-409 is disordered; it reads PFQDTPSSSQATEAAEVDMEKRNDPRI. Residues 384–394 are compositionally biased toward polar residues; the sequence is FQDTPSSSQAT. The segment covering 400–409 has biased composition (basic and acidic residues); sequence DMEKRNDPRI.

It belongs to the histone deacetylase family. HD type 1 subfamily. Zn(2+) is required as a cofactor. Low expression in flowers.

It localises to the nucleus. It catalyses the reaction N(6)-acetyl-L-lysyl-[histone] + H2O = L-lysyl-[histone] + acetate. Functionally, responsible for the deacetylation of lysine residues on the N-terminal part of the core histones (H2A, H2B, H3 and H4). Histone deacetylation gives a tag for epigenetic repression and plays an important role in transcriptional regulation, cell cycle progression and developmental events. May be involved in flowering induction. Histone deacetylases act via the formation of large multiprotein complexes. This Arabidopsis thaliana (Mouse-ear cress) protein is Histone deacetylase 7 (HDA7).